Here is a 123-residue protein sequence, read N- to C-terminus: MKLLLLALPMLVLLPQVIPAYSGEKKCWNRSGHCRKQCKDGEAVKDTCKNLRACCVPSNEDHRRVPTTSPTPLSDSTRGVIDDILTVRFTTDYFEVSSKKNMVEESEVGQGTQTSLPNVHHSS.

Positions 1-19 are cleaved as a signal peptide; it reads MKLLLLALPMLVLLPQVIP. 3 disulfides stabilise this stretch: Cys27–Cys54, Cys34–Cys48, and Cys38–Cys55. Residues 65-123 constitute a propeptide that is removed on maturation; the sequence is VPTTSPTPLSDSTRGVIDDILTVRFTTDYFEVSSKKNMVEESEVGQGTQTSLPNVHHSS. Residues 100-123 form a disordered region; that stretch reads KNMVEESEVGQGTQTSLPNVHHSS. A compositionally biased stretch (polar residues) spans 109-123; sequence GQGTQTSLPNVHHSS.

It belongs to the beta-defensin family. The three-dimensional structure formed by the three intramolecular disulfide bridges is indispensable for antimicrobial activity.

The protein localises to the secreted. Its function is as follows. Host defense peptide that exhibits antimicrobial activity against both Gram-negative bacteria, such as E.coli and S.typhimurium, and Gram-positive bacteria, such as S.aureus and B.subtilis. Inhibits cell adhesion of E.coli on intestinal epithelial enterocytes. Causes rapid permeabilization of both the outer and inner membrane of E.coli, leading to morphological alterations on the bacterial surface. Binds to bacterial lipopolysaccharides (LPS) with high affinity, and may thereby be involved in immunoregulation through LPS neutralization. May contribute to epididymal innate immunity and protect the sperm against attack by microorganisms. This chain is Defensin beta 118 (DEFB118), found in Pongo pygmaeus (Bornean orangutan).